The following is a 580-amino-acid chain: 3-(3-hydroxy-phenyl)propionate/3-hydroxycinnamic acid hydroxylase (580 aa).

FAD contacts are provided by residues 14-43 (DVLV…VVEE) and 291-301 (FRRGRLLLAGD).

Belongs to the PheA/TfdB FAD monooxygenase family. The cofactor is FAD.

It carries out the reaction 3-(3-hydroxyphenyl)propanoate + NADH + O2 + H(+) = 3-(2,3-dihydroxyphenyl)propanoate + NAD(+) + H2O. The catalysed reaction is (2E)-3-(3-hydroxyphenyl)prop-2-enoate + NADH + O2 + H(+) = (2E)-3-(2,3-dihydroxyphenyl)prop-2-enoate + NAD(+) + H2O. The protein operates within aromatic compound metabolism; 3-phenylpropanoate degradation. Functionally, catalyzes the insertion of one atom of molecular oxygen into position 2 of the phenyl ring of 3-(3-hydroxyphenyl)propionate (3-HPP) and hydroxycinnamic acid (3HCI). This Mycobacterium avium (strain 104) protein is 3-(3-hydroxy-phenyl)propionate/3-hydroxycinnamic acid hydroxylase.